The chain runs to 337 residues: CMRF35-like molecule 1 (337 aa).

An N-terminal signal peptide occupies residues M1–A19. The Ig-like V-type domain maps to E20 to N125. Residues E20–S193 lie on the Extracellular side of the membrane. The segment at V39 to S45 is plays an important role in murine norovirus (MNV) binding. 2 disulfides stabilise this stretch: C41–C109 and C55–C63. The helical transmembrane segment at V194 to A214 threads the bilayer. Topologically, residues W215–P337 are cytoplasmic. 2 disordered regions span residues Q248–H270 and L318–P337. Residues S252–S266 show a composition bias toward low complexity.

It belongs to the CD300 family. As to quaternary structure, interacts with PTPN6/SHP-1 in a tyrosine phosphorylation dependent manner. Interacts with IL4R. Phosphorylated on tyrosine. As to expression, expressed in myeloid cells. Present on the surface of macrophages (at protein level). Highly expressed by alveolar, splenic macrophages and bone marrow-derived dendritic cells. Expression is increased following aeroallergen challenge in macrophages, mast cells, and eosinophils.

The protein localises to the cell membrane. Its function is as follows. Acts as an inhibitory receptor for myeloid cells and mast cells. Positively regulates the phagocytosis of apoptotic cells (efferocytosis) via phosphatidylserine (PS) recognition; recognizes and binds PS as a ligand which is expressed on the surface of apoptotic cells. Plays an important role in the maintenance of immune homeostasis, by promoting macrophage-mediated efferocytosis and by inhibiting dendritic cell-mediated efferocytosis. Negatively regulates Fc epsilon receptor-dependent mast cell activation and allergic responses via binding to ceramide which acts as a ligand. May act as a coreceptor for interleukin 4 (IL-4). Associates with and regulates IL-4 receptor alpha-mediated responses by augmenting IL-4- and IL-13-induced signaling. Negatively regulates the Toll-like receptor (TLR) signaling mediated by MYD88 and TRIF through activation of PTPN6/SHP-1 and PTPN11/SHP-2. Inhibits osteoclast formation. Induces macrophage cell death upon engagement. In terms of biological role, (Microbial infection) Acts as a functional receptor for murine norovirus (MNV). Mediates binding to the cell surface and is both necessary and sufficient for viral entry and replication. This interaction requires Mg(2+) and Ca(2+) and is enhanced by bile acids. Primary determinant of MNV species tropism and is sufficient to render cells permissive to infection by MNV. Can render nonmurine mammalian cells susceptible to MNV infection. The polypeptide is CMRF35-like molecule 1 (Cd300lf) (Mus musculus (Mouse)).